A 150-amino-acid chain; its full sequence is uncharacterized protein (150 aa).

Positions 81-90 (TTKPSCSFAQ) are enriched in polar residues. The segment at 81–125 (TTKPSCSFAQPVTPRTREGAGVRGHRRRRRGSLSLIPWKTSNDKQ) is disordered.

This is an uncharacterized protein from Homo sapiens (Human).